The primary structure comprises 849 residues: Rho guanine nucleotide exchange factor 15 (849 aa).

Disordered regions lie at residues 1–146 (MSAQ…ASAP), 159–202 (GAEG…NGTP), and 277–308 (LPPL…LPSE). Positions 18 to 31 (RIIRPRPPSRHRAP) are enriched in basic residues. Positions 48–59 (QISNDASASVCT) are enriched in polar residues. A compositionally biased stretch (low complexity) spans 65-110 (PPTASLKPPALLPPSVSRTSLDSQTSPDSPSSTPSPSPVSRRSISP). A phosphoserine mark is found at Ser-107 and Ser-109. The segment covering 111–123 (EPAPCSPVPPPKP) has biased composition (pro residues). Positions 164–180 (AQSSDSLERCSQGSTEV) are enriched in polar residues. Tyr-361 is modified (phosphotyrosine; by EPHB2). The region spanning 425–609 (RMQESLFEVV…SKIIERCSAE (185 aa)) is the DH domain. Polar residues-rich tracts occupy residues 771 to 786 (CSEP…QSLE) and 840 to 849 (SSGTPDTPQP). 2 disordered regions span residues 771–803 (CSEP…GWLK) and 819–849 (GEHE…TPQP).

Interacts with EPHA4. Interacts with EPHB2. Phosphorylated on tyrosine residues upon EFNA1 stimulation. EPHB2-dependent phosphorylation at Tyr-361 triggers UBE3A-mediated ubiquitination. In terms of processing, ubiquitinated; UBE3A-mediated ubiquitination and degradation by the proteasome promotes EFNB1-dependent synapse formation. In terms of tissue distribution, at P12, expressed is detected in the CA1 region and the dentate gyrus of the hippocampus.

The protein resides in the cell projection. The protein localises to the dendrite. Functionally, specific GEF for RhoA activation. Does not activate RAC1 or CDC42. Regulates vascular smooth muscle contractility. Negatively regulates excitatory synapse development by suppressing the synapse-promoting activity of EPHB2. The sequence is that of Rho guanine nucleotide exchange factor 15 (Arhgef15) from Mus musculus (Mouse).